The primary structure comprises 276 residues: Cell division protein FtsQ (276 aa).

At 1 to 27 (MSQAALNTRNSEEEVSSRRNNGTRLAG) the chain is on the cytoplasmic side. A helical transmembrane segment spans residues 28-48 (ILFLLTVLTTVLVSGWVVLGW). At 49–276 (MEDAQRLPLS…QQNQAQAEQQ (228 aa)) the chain is on the periplasmic side. Residues 55 to 126 (LPLSKLVLTG…DELKIHLVEY (72 aa)) form the POTRA domain. A disordered region spans residues 255–276 (GWAPLPPEESTQQQNQAQAEQQ). Positions 266–276 (QQQNQAQAEQQ) are enriched in low complexity.

This sequence belongs to the FtsQ/DivIB family. FtsQ subfamily. As to quaternary structure, part of a complex composed of FtsB, FtsL and FtsQ. The complex can be formed before its localization to the division site. This tripartite complex can be divided further into a subcomplex of FtsB and FtsL, which forms in the absence of FtsQ. Interacts with FtsA, FtsK, FtsL, FtsB, FtsW, FtsI, FtsN, FtsX and YmgF.

It localises to the cell inner membrane. Its function is as follows. Essential cell division protein. May link together the upstream cell division proteins, which are predominantly cytoplasmic, with the downstream cell division proteins, which are predominantly periplasmic. May control correct divisome assembly. In Escherichia coli (strain K12), this protein is Cell division protein FtsQ.